Reading from the N-terminus, the 447-residue chain is Asparagine--tRNA ligase (447 aa).

Belongs to the class-II aminoacyl-tRNA synthetase family. Homodimer.

It is found in the cytoplasm. It carries out the reaction tRNA(Asn) + L-asparagine + ATP = L-asparaginyl-tRNA(Asn) + AMP + diphosphate + H(+). This Lactococcus lactis subsp. cremoris (strain MG1363) protein is Asparagine--tRNA ligase.